Consider the following 414-residue polypeptide: L-cysteine:1D-myo-inositol 2-amino-2-deoxy-alpha-D-glucopyranoside ligase (414 aa).

The interval 1 to 38 (MRSWPAPEVPNLPEAGLPGPALPLHLHDTATGTVRPTR) is disordered. A compositionally biased stretch (low complexity) spans 11-38 (NLPEAGLPGPALPLHLHDTATGTVRPTR). Cys48 contacts Zn(2+). L-cysteinyl-5'-AMP-binding positions include 48 to 51 (CGIT), Thr63, and 86 to 88 (NVT). The 'HIGH' region signature appears at 50–60 (ITPYDATHLGH). The 'ERGGDP' region signature appears at 188–193 (ERGGDP). Trp228 lines the L-cysteinyl-5'-AMP pocket. A Zn(2+)-binding site is contributed by Cys232. 250–252 (GSD) contributes to the L-cysteinyl-5'-AMP binding site. His257 is a binding site for Zn(2+). An L-cysteinyl-5'-AMP-binding site is contributed by Val284. Positions 290–294 (KMSKS) match the 'KMSKS' region motif.

The protein belongs to the class-I aminoacyl-tRNA synthetase family. MshC subfamily. As to quaternary structure, monomer. Zn(2+) is required as a cofactor.

It catalyses the reaction 1D-myo-inositol 2-amino-2-deoxy-alpha-D-glucopyranoside + L-cysteine + ATP = 1D-myo-inositol 2-(L-cysteinylamino)-2-deoxy-alpha-D-glucopyranoside + AMP + diphosphate + H(+). Catalyzes the ATP-dependent condensation of GlcN-Ins and L-cysteine to form L-Cys-GlcN-Ins. The protein is L-cysteine:1D-myo-inositol 2-amino-2-deoxy-alpha-D-glucopyranoside ligase of Thermomonospora curvata (strain ATCC 19995 / DSM 43183 / JCM 3096 / KCTC 9072 / NBRC 15933 / NCIMB 10081 / Henssen B9).